A 166-amino-acid polypeptide reads, in one-letter code: Xanthine-guanine phosphoribosyltransferase (166 aa).

5-phospho-alpha-D-ribose 1-diphosphate is bound by residues 42–43 and 99–107; these read RG and DDLTDTGKT. A Mg(2+)-binding site is contributed by Asp100. 2 residues coordinate guanine: Asp103 and Ile146. Residues Asp103 and Ile146 each contribute to the xanthine site. Residues 103 to 107 and 145 to 146 contribute to the GMP site; these read DTGKT and WI.

The protein belongs to the purine/pyrimidine phosphoribosyltransferase family. XGPT subfamily. As to quaternary structure, homotetramer. Mg(2+) serves as cofactor.

The protein localises to the cell inner membrane. The enzyme catalyses GMP + diphosphate = guanine + 5-phospho-alpha-D-ribose 1-diphosphate. The catalysed reaction is XMP + diphosphate = xanthine + 5-phospho-alpha-D-ribose 1-diphosphate. It carries out the reaction IMP + diphosphate = hypoxanthine + 5-phospho-alpha-D-ribose 1-diphosphate. It participates in purine metabolism; GMP biosynthesis via salvage pathway; GMP from guanine: step 1/1. Its pathway is purine metabolism; XMP biosynthesis via salvage pathway; XMP from xanthine: step 1/1. Purine salvage pathway enzyme that catalyzes the transfer of the ribosyl-5-phosphate group from 5-phospho-alpha-D-ribose 1-diphosphate (PRPP) to the N9 position of the 6-oxopurines guanine and xanthine to form the corresponding ribonucleotides GMP (guanosine 5'-monophosphate) and XMP (xanthosine 5'-monophosphate), with the release of PPi. To a lesser extent, also acts on hypoxanthine. The protein is Xanthine-guanine phosphoribosyltransferase of Mesorhizobium japonicum (strain LMG 29417 / CECT 9101 / MAFF 303099) (Mesorhizobium loti (strain MAFF 303099)).